A 213-amino-acid chain; its full sequence is Imidazole glycerol phosphate synthase subunit HisH (213 aa).

Residues 6 to 213 (LVTVIDYGMG…FKNFLNWNGQ (208 aa)) enclose the Glutamine amidotransferase type-1 domain. Cys86 functions as the Nucleophile in the catalytic mechanism. Residues His192 and Glu194 contribute to the active site.

In terms of assembly, heterodimer of HisH and HisF.

Its subcellular location is the cytoplasm. It catalyses the reaction 5-[(5-phospho-1-deoxy-D-ribulos-1-ylimino)methylamino]-1-(5-phospho-beta-D-ribosyl)imidazole-4-carboxamide + L-glutamine = D-erythro-1-(imidazol-4-yl)glycerol 3-phosphate + 5-amino-1-(5-phospho-beta-D-ribosyl)imidazole-4-carboxamide + L-glutamate + H(+). The catalysed reaction is L-glutamine + H2O = L-glutamate + NH4(+). Its pathway is amino-acid biosynthesis; L-histidine biosynthesis; L-histidine from 5-phospho-alpha-D-ribose 1-diphosphate: step 5/9. IGPS catalyzes the conversion of PRFAR and glutamine to IGP, AICAR and glutamate. The HisH subunit catalyzes the hydrolysis of glutamine to glutamate and ammonia as part of the synthesis of IGP and AICAR. The resulting ammonia molecule is channeled to the active site of HisF. The chain is Imidazole glycerol phosphate synthase subunit HisH from Hydrogenovibrio crunogenus (strain DSM 25203 / XCL-2) (Thiomicrospira crunogena).